The sequence spans 575 residues: Septation ring formation regulator EzrA (575 aa).

Over 1 to 8 the chain is Extracellular; it reads MSNGQLIY. Residues 9 to 27 traverse the membrane as a helical segment; sequence LMVAIAVILVLAYVVAIFL. The Cytoplasmic segment spans residues 28-575; sequence RKRNEGRLEA…YEKTRETIRF (548 aa). Coiled-coil stretches lie at residues 105-191, 265-301, 354-416, and 456-526; these read LKAS…FVTL, LYEA…LYDI, VRRI…IEKD, and TASN…IQEA.

Belongs to the EzrA family.

It localises to the cell membrane. Functionally, negative regulator of FtsZ ring formation; modulates the frequency and position of FtsZ ring formation. Inhibits FtsZ ring formation at polar sites. Interacts either with FtsZ or with one of its binding partners to promote depolymerization. In Streptococcus pneumoniae (strain ATCC BAA-255 / R6), this protein is Septation ring formation regulator EzrA.